The following is a 936-amino-acid chain: Sine oculis-binding protein homolog A (936 aa).

Basic and acidic residues predominate over residues 1–14 (MAEMEKEGRPPESK). 2 disordered regions span residues 1–46 (MAEM…GQAG) and 108–151 (ASTL…HGGL). Residues 108–144 (ASTLENSSGSPPHANSSGSTPTSRNGVTAESSVNPSS) are compositionally biased toward polar residues. 2 FCS-type zinc fingers span residues 169–207 (EDSSNVQIMCAWCQKVGVKRYSLSMGSELKSFCSEKCFA) and 247–287 (LKTN…KCLN). Disordered stretches follow at residues 311–330 (LPTSDTKSESGAGVQLLTPE), 336–424 (LSEL…VMTP), 486–511 (SPHLHPSSTPTLSGNPPGIMPPHPAA), 574–632 (NPQR…KQTE), 697–727 (PPPALLGETELDGSTSISTGTAKDDHRDTYS), and 842–877 (DSAGKRCSNDQSAITTGTGDDKSQSPEDDPSGEDHA). The segment covering 349 to 382 (GATIAGPSGSTSGSPSEAGTVCSSSSSSSSSSSS) has biased composition (low complexity). Positions 395–404 (SLPPPHPPPI) are enriched in pro residues. 3 stretches are compositionally biased toward polar residues: residues 617–632 (PPNSDTLSPEFSKQTE), 708–717 (DGSTSISTGT), and 850–859 (NDQSAITTGT).

The protein belongs to the SOBP family.

Implicated in development of the cochlea. This chain is Sine oculis-binding protein homolog A (sobpa), found in Danio rerio (Zebrafish).